Consider the following 330-residue polypeptide: Ketol-acid reductoisomerase (NADP(+)) (330 aa).

The region spanning 1–181 is the KARI N-terminal Rossmann domain; sequence MNVYYEQDAD…GGAKAGVIET (181 aa). Residues 24-27, R47, S50, S52, and 82-85 contribute to the NADP(+) site; these read YGSQ and DQYQ. The active site involves H107. G133 lines the NADP(+) pocket. Residues 182–327 enclose the KARI C-terminal knotted domain; sequence TIKNETETDL…AKLRNMMSWL (146 aa). Mg(2+)-binding residues include D190, E194, E226, and E230. S251 lines the substrate pocket.

The protein belongs to the ketol-acid reductoisomerase family. Mg(2+) serves as cofactor.

It carries out the reaction (2R)-2,3-dihydroxy-3-methylbutanoate + NADP(+) = (2S)-2-acetolactate + NADPH + H(+). It catalyses the reaction (2R,3R)-2,3-dihydroxy-3-methylpentanoate + NADP(+) = (S)-2-ethyl-2-hydroxy-3-oxobutanoate + NADPH + H(+). It functions in the pathway amino-acid biosynthesis; L-isoleucine biosynthesis; L-isoleucine from 2-oxobutanoate: step 2/4. Its pathway is amino-acid biosynthesis; L-valine biosynthesis; L-valine from pyruvate: step 2/4. Its function is as follows. Involved in the biosynthesis of branched-chain amino acids (BCAA). Catalyzes an alkyl-migration followed by a ketol-acid reduction of (S)-2-acetolactate (S2AL) to yield (R)-2,3-dihydroxy-isovalerate. In the isomerase reaction, S2AL is rearranged via a Mg-dependent methyl migration to produce 3-hydroxy-3-methyl-2-ketobutyrate (HMKB). In the reductase reaction, this 2-ketoacid undergoes a metal-dependent reduction by NADPH to yield (R)-2,3-dihydroxy-isovalerate. This chain is Ketol-acid reductoisomerase (NADP(+)), found in Chlorobium phaeovibrioides (strain DSM 265 / 1930) (Prosthecochloris vibrioformis (strain DSM 265)).